A 156-amino-acid polypeptide reads, in one-letter code: Small ribosomal subunit protein uS7 (156 aa).

It belongs to the universal ribosomal protein uS7 family. In terms of assembly, part of the 30S ribosomal subunit. Contacts proteins S9 and S11.

Its function is as follows. One of the primary rRNA binding proteins, it binds directly to 16S rRNA where it nucleates assembly of the head domain of the 30S subunit. Is located at the subunit interface close to the decoding center, probably blocks exit of the E-site tRNA. The chain is Small ribosomal subunit protein uS7 from Pasteurella multocida (strain Pm70).